We begin with the raw amino-acid sequence, 987 residues long: MPMDKTFNAAEAEARLYDAWEKAGAFRAGANASRPETFCIMIPPPNVTGSLHMGHAFNNTLQDILTRWHRMRGFDTLWQPGQDHAGIATQMVVERELAKSGQPGRREMGREAFLEKVWEWKEQSGGTIVNQLKRLGASCDWSRNAFTMDPNFQRAVLKVFVDLYEKGFIYRGKRLVNWDPHFETAISDLEVEQVEVNGNMWRLRYQLADGATYRHPVAFDEEGRPTEWEERDYLTVATTRPETMLGDTGIAVNPADERYAHLIGKEVVLPLVGRRIPIVADDYADPSKGTGAVKITPAHDFNDWGVGQRTGLRAINVMSGRATMFLIENPDFTEGCAPSEEALALDGLDRYEARKRVVALAEEQGWLDGIDQDRHMVPHGDRSKVAIEPMLTDQWFVDTAQIVQPAIDAVRTGRTEILPERDAKTYFHWLENIEPWCISRQLWWGHQIPVWYGLDIWPARFEDDGDDTLDEVEIFELLEDGAFNHADPTHHCAFDFEGVSEKFLDDLASLPHPLNNARVVEVASRAEAIDRLAQALADYNLNEDPTHLVYPVWRDPDVLDTWFSSGLWPIGTLGWPEETPELARYFPTNVLITGFDIIFFWVARMMMMQLAVVNEVPFKTVYVHALVRDEKGKKMSKSLGNVLDPLELIDEFGADAVRFTLTAMAAMGRDLKLSTARIQGYRNFGTKLWNACRFAEMNGVWEGHATQAAPPAATATVNRWIIGETGRVREEVDAALAAYRFDSAANALYAFVWGKVCDWYVEFSKPLFDTEAAAETRATMGWVLDQCMVLLHPIMPFITEDLWATTGSRTKMLVHSDWPSFGAELVDPAADREMSWVISLIEEIRSARAQVHVPAGLKLPVVQLALDAAGREALARNEALILRLARLEGFTEAASAPKGALTIAVEGGSFAIPLEGVIDIGAEKARLAKTLEKLEKDMAGLRGRLGNPNFVASAPEEVVDEARTRLEQGEEEGAKLSAALARLSEIA.

Positions 45 to 55 (PNVTGSLHMGH) match the 'HIGH' region motif. A 'KMSKS' region motif is present at residues 634–638 (KMSKS). Lysine 637 is an ATP binding site. Positions 917 to 985 (VIDIGAEKAR…LSAALARLSE (69 aa)) form a coiled coil.

The protein belongs to the class-I aminoacyl-tRNA synthetase family. ValS type 1 subfamily. As to quaternary structure, monomer.

The protein resides in the cytoplasm. It carries out the reaction tRNA(Val) + L-valine + ATP = L-valyl-tRNA(Val) + AMP + diphosphate. Functionally, catalyzes the attachment of valine to tRNA(Val). As ValRS can inadvertently accommodate and process structurally similar amino acids such as threonine, to avoid such errors, it has a 'posttransfer' editing activity that hydrolyzes mischarged Thr-tRNA(Val) in a tRNA-dependent manner. The chain is Valine--tRNA ligase from Cereibacter sphaeroides (strain ATCC 17023 / DSM 158 / JCM 6121 / CCUG 31486 / LMG 2827 / NBRC 12203 / NCIMB 8253 / ATH 2.4.1.) (Rhodobacter sphaeroides).